The sequence spans 261 residues: GTP cyclohydrolase FolE2 (261 aa).

Belongs to the GTP cyclohydrolase IV family.

The catalysed reaction is GTP + H2O = 7,8-dihydroneopterin 3'-triphosphate + formate + H(+). Its pathway is cofactor biosynthesis; 7,8-dihydroneopterin triphosphate biosynthesis; 7,8-dihydroneopterin triphosphate from GTP: step 1/1. Converts GTP to 7,8-dihydroneopterin triphosphate. The polypeptide is GTP cyclohydrolase FolE2 (Geobacter metallireducens (strain ATCC 53774 / DSM 7210 / GS-15)).